Here is a 518-residue protein sequence, read N- to C-terminus: Cytochrome P450 monooxygenase psoD (518 aa).

Cysteine 442 is a heme binding site.

Belongs to the cytochrome P450 family. It depends on heme as a cofactor.

It participates in secondary metabolite biosynthesis. Cytochrome P450 monooxygenase; part of the gene cluster that mediates the biosynthesis of pseurotin A, a competitive inhibitor of chitin synthase and an inducer of nerve-cell proliferation. The PKS-NRPS hybrid synthetase psoA is responsible for the biosynthesis of azaspirene, one of the first intermediates having the 1-oxa-7-azaspiro[4,4]-non-2-ene-4,6-dione core of pseurotin, via condensation of one acetyl-CoA, 4 malonyl-CoA, and a L-phenylalanine molecule. The dual-functional monooxygenase/methyltransferase psoF seems to be involved in the addition of the C3 methyl group onto the pseurotin scaffold. Azaspirene is then converted to synerazol through 4 steps including oxidation of C17 by the cytochrome P450 monooxygenase psoD, O-methylation of the hydroxy group of C8 by the methyltransferase psoC, and the trans-to-cis isomerization of the C13 olefin by the glutathione S-transferase psoE. The fourth step of synerazol production is performed by the dual-functional monooxygenase/methyltransferase psoF which seems to catalyze the epoxidation of the intermediate deepoxy-synerazol. Synerazol can be attacked by a water molecule nonenzymatically at two different positions to yield two diol products, pseurotin A and pseurotin D. The sequence is that of Cytochrome P450 monooxygenase psoD from Aspergillus fumigatus (strain ATCC MYA-4609 / CBS 101355 / FGSC A1100 / Af293) (Neosartorya fumigata).